We begin with the raw amino-acid sequence, 616 residues long: Chaperone protein HscA (616 aa).

Belongs to the heat shock protein 70 family.

Its function is as follows. Chaperone involved in the maturation of iron-sulfur cluster-containing proteins. Has a low intrinsic ATPase activity which is markedly stimulated by HscB. Involved in the maturation of IscU. The polypeptide is Chaperone protein HscA (Serratia proteamaculans (strain 568)).